The following is a 919-amino-acid chain: Kinesin-like protein KIN-UA (919 aa).

The disordered stretch occupies residues 1-68 (MSTTSGTGGV…SGGGGDAGVP (68 aa)). Residues 15 to 51 (GTQRSSLRTQSSASTSSGGQKASVKSKSVLRKSSPAA) are compositionally biased toward low complexity. The segment covering 52–66 (LGGGSSKSGGGGDAG) has biased composition (gly residues). Residues 70 to 412 (RVRVAVRLRP…IMFGQRAMKV (343 aa)) enclose the Kinesin motor domain. 155 to 162 (GQTGTGKT) serves as a coordination point for ATP. The interval 286-305 (TRDGLSSESNGNSHMTKSLK) is disordered. The segment covering 291-301 (SSESNGNSHMT) has biased composition (polar residues). The D-BOX motif lies at 382-390 (RTSLVITIG). Coiled-coil stretches lie at residues 428-492 (SRRL…SIKK) and 530-621 (ALEE…LEQH). ARM repeat units lie at residues 650–689 (KPPVARLFEQVGLQKILSLLEAEDADVRIHAVKVVANLAA), 691–731 (EANQ…NLAM), 733–773 (ETNQ…NLCG), and 775–814 (DKLQTKLRSEGGIAALLGMVRCGHPDVLAQVARGIANFAK).

Belongs to the TRAFAC class myosin-kinesin ATPase superfamily. Kinesin family. Ungrouped subfamily. As to quaternary structure, interacts (via C-terminus) with NEK5. As to expression, expressed in leaves, guard cells, trichomes, vascular tissues, stele of the root tip region and columella cells. Highest expression detected in guard cells.

Its subcellular location is the cytoplasm. It is found in the cytoskeleton. This is Kinesin-like protein KIN-UA from Arabidopsis thaliana (Mouse-ear cress).